The sequence spans 74 residues: Putative membrane protein insertion efficiency factor (74 aa).

It belongs to the UPF0161 family.

Its subcellular location is the cell inner membrane. Could be involved in insertion of integral membrane proteins into the membrane. In Blochmanniella floridana, this protein is Putative membrane protein insertion efficiency factor.